A 469-amino-acid chain; its full sequence is MNPNQKIITIGSVSLTIATVCFLMQIAILVTTVTLHFKQHECDSPASNQVMPCEPIIIERNITEIVYLNNTTIEKEICPEVVEYRNWSKPQCQITGFAPFSKDNSIRLSAGGDIWVTREPYVSCDPGKCYQFALGQGTTLDNKHSNDTIHDRIPHRTLLMNELGVPFHLGTRQVCVAWSSSSCHDGKAWLHVCVTGDDKNATASFIYDGRLMDSIGSWSQNILRTQESECVCINGTCTVVMTDGSASGRADTRILFIEEGKIVHISPLSGSAQHVEECSCYPRYPDVRCICRDNWKGSNRPVIDINMEDYSIDSSYVCSGLVGDTPRNDDRSSNSNCRNPNNERGNPGVKGWAFDNGDDVWMGRTISKDLRSGYETFKVIGGWSTPNSKSQINRQVIVDSNNWSGYSGIFSVEGKRCINRCFYVELIRGRQQETRVWWTSNSIVVFCGTSGTYGTGSWPDGANINFMPI.

At 1–9 (MNPNQKIIT) the chain is on the intravirion side. A helical transmembrane segment spans residues 10–30 (IGSVSLTIATVCFLMQIAILV). An involved in apical transport and lipid raft association region spans residues 11 to 33 (GSVSLTIATVCFLMQIAILVTTV). Residues 31-469 (TTVTLHFKQH…DGANINFMPI (439 aa)) are Virion surface-facing. Positions 36-88 (HFKQHECDSPASNQVMPCEPIIIERNITEIVYLNNTTIEKEICPEVVEYRNWS) are hypervariable stalk region. Residues asparagine 61, asparagine 69, asparagine 70, and asparagine 86 are each glycosylated (N-linked (GlcNAc...) asparagine; by host). Residues 91-469 (QCQITGFAPF…DGANINFMPI (379 aa)) are head of neuraminidase. 8 cysteine pairs are disulfide-bonded: cysteine 92–cysteine 417, cysteine 124–cysteine 129, cysteine 183–cysteine 230, cysteine 232–cysteine 237, cysteine 278–cysteine 291, cysteine 280–cysteine 289, cysteine 318–cysteine 337, and cysteine 421–cysteine 447. Arginine 118 is a binding site for substrate. An N-linked (GlcNAc...) asparagine; by host glycan is attached at asparagine 146. Catalysis depends on aspartate 151, which acts as the Proton donor/acceptor. Arginine 152 contacts substrate. N-linked (GlcNAc...) asparagine; by host glycosylation is found at asparagine 200 and asparagine 234. 276 to 277 (EE) contributes to the substrate binding site. Residue arginine 292 participates in substrate binding. Ca(2+)-binding residues include aspartate 293, glycine 297, and aspartate 324. The disordered stretch occupies residues 324-350 (DTPRNDDRSSNSNCRNPNNERGNPGVK). Residues 333–347 (SNSNCRNPNNERGNP) are compositionally biased toward low complexity. Residue arginine 371 participates in substrate binding. The N-linked (GlcNAc...) asparagine; by host glycan is linked to asparagine 402. The active-site Nucleophile is tyrosine 406.

It belongs to the glycosyl hydrolase 34 family. In terms of assembly, homotetramer. Ca(2+) serves as cofactor. Post-translationally, N-glycosylated.

It is found in the virion membrane. The protein localises to the host apical cell membrane. It carries out the reaction Hydrolysis of alpha-(2-&gt;3)-, alpha-(2-&gt;6)-, alpha-(2-&gt;8)- glycosidic linkages of terminal sialic acid residues in oligosaccharides, glycoproteins, glycolipids, colominic acid and synthetic substrates.. With respect to regulation, inhibited by the neuraminidase inhibitors zanamivir (Relenza) and oseltamivir (Tamiflu). These drugs interfere with the release of progeny virus from infected cells and are effective against all influenza strains. Resistance to neuraminidase inhibitors is quite rare. Functionally, catalyzes the removal of terminal sialic acid residues from viral and cellular glycoconjugates. Cleaves off the terminal sialic acids on the glycosylated HA during virus budding to facilitate virus release. Additionally helps virus spread through the circulation by further removing sialic acids from the cell surface. These cleavages prevent self-aggregation and ensure the efficient spread of the progeny virus from cell to cell. Otherwise, infection would be limited to one round of replication. Described as a receptor-destroying enzyme because it cleaves a terminal sialic acid from the cellular receptors. May facilitate viral invasion of the upper airways by cleaving the sialic acid moieties on the mucin of the airway epithelial cells. Likely to plays a role in the budding process through its association with lipid rafts during intracellular transport. May additionally display a raft-association independent effect on budding. Plays a role in the determination of host range restriction on replication and virulence. Sialidase activity in late endosome/lysosome traffic seems to enhance virus replication. This Aves (Human) protein is Neuraminidase.